The primary structure comprises 335 residues: 2-acylglycerol O-acyltransferase 1 (335 aa).

A run of 2 helical transmembrane segments spans residues 24–44 and 47–67; these read WVFS…SLVL and LWLI…TPQA. 3 N-linked (GlcNAc...) asparagine glycosylation sites follow: Asn77, Asn125, and Asn180.

Belongs to the diacylglycerol acyltransferase family.

It localises to the endoplasmic reticulum membrane. The enzyme catalyses a 2-acylglycerol + an acyl-CoA = a 1,2-diacylglycerol + CoA. It catalyses the reaction a 2-acylglycerol + an acyl-CoA = a 1,2-diacyl-sn-glycerol + CoA. It carries out the reaction a 2-acylglycerol + an acyl-CoA = a 2,3-diacyl-sn-glycerol + CoA. The catalysed reaction is a 1-acylglycerol + an acyl-CoA = a 1,2-diacylglycerol + CoA. The enzyme catalyses a 1-acylglycerol + an acyl-CoA = a 1,3-diacylglycerol + CoA. It catalyses the reaction a 1-acyl-sn-glycerol + an acyl-CoA = a 1,3-diacyl-sn-glycerol + CoA. It carries out the reaction a 3-acyl-sn-glycerol + an acyl-CoA = a 1,3-diacyl-sn-glycerol + CoA. The protein operates within glycerolipid metabolism; triacylglycerol biosynthesis. Its function is as follows. Involved in glycerolipid synthesis and lipid metabolism. Catalyzes the formation of diacylglycerol, the precursor of triacylglycerol, by transferring the acyl chain of a fatty acyl-CoA to a monoacylglycerol, mainly at the sn-1 or sn-3 positions. It uses both sn-2-monoacylglycerol (2-acylglycerol) and sn-1-monoacylglycerol (1-acyl-sn-glycerol) equally well as substrates, and uses sn-3-monoacylglycerol (3-acyl-sn-glycerol) with lower efficiency. This is 2-acylglycerol O-acyltransferase 1 (mogat1) from Xenopus tropicalis (Western clawed frog).